The primary structure comprises 514 residues: 2-isopropylmalate synthase (514 aa).

Positions 5-268 (LIIFDTTLRD…DVGIDTTQIV (264 aa)) constitute a Pyruvate carboxyltransferase domain. Mn(2+) is bound by residues D14, H202, H204, and N239. The regulatory domain stretch occupies residues 395-514 (KFVSLSQHSE…KDDKLNPQRS (120 aa)).

This sequence belongs to the alpha-IPM synthase/homocitrate synthase family. LeuA type 1 subfamily. In terms of assembly, homodimer. Mn(2+) serves as cofactor.

It localises to the cytoplasm. It catalyses the reaction 3-methyl-2-oxobutanoate + acetyl-CoA + H2O = (2S)-2-isopropylmalate + CoA + H(+). Its pathway is amino-acid biosynthesis; L-leucine biosynthesis; L-leucine from 3-methyl-2-oxobutanoate: step 1/4. Functionally, catalyzes the condensation of the acetyl group of acetyl-CoA with 3-methyl-2-oxobutanoate (2-ketoisovalerate) to form 3-carboxy-3-hydroxy-4-methylpentanoate (2-isopropylmalate). The polypeptide is 2-isopropylmalate synthase (Burkholderia multivorans (strain ATCC 17616 / 249)).